Here is a 1066-residue protein sequence, read N- to C-terminus: Ubiquitin conjugation factor E4 A (1066 aa).

The segment at 33-57 is disordered; that stretch reads KEQLKQQSDELPASPDDSDNSVSES. Lys386 carries the post-translational modification N6-acetyllysine. Positions 987 to 1061 constitute a U-box domain; that stretch reads DACDEFLDPI…QRWLAERKQQ (75 aa).

This sequence belongs to the ubiquitin conjugation factor E4 family.

The protein resides in the cytoplasm. The enzyme catalyses S-ubiquitinyl-[E2 ubiquitin-conjugating enzyme]-L-cysteine + [acceptor protein]-L-lysine = [E2 ubiquitin-conjugating enzyme]-L-cysteine + N(6)-ubiquitinyl-[acceptor protein]-L-lysine.. It participates in protein modification; protein ubiquitination. Its function is as follows. Ubiquitin-protein ligase that probably functions as an E3 ligase in conjunction with specific E1 and E2 ligases. May also function as an E4 ligase mediating the assembly of polyubiquitin chains on substrates ubiquitinated by another E3 ubiquitin ligase. Mediates 'Lys-48'-linked polyubiquitination of substrates. This chain is Ubiquitin conjugation factor E4 A, found in Pongo abelii (Sumatran orangutan).